Consider the following 388-residue polypeptide: Succinate--CoA ligase [ADP-forming] subunit beta (388 aa).

Positions 9–244 constitute an ATP-grasp domain; the sequence is KEILRKFGVA…LDEEDPAEIE (236 aa). ATP is bound by residues lysine 46, 53–55, glutamate 99, alanine 102, and glutamate 107; that span reads GRG. Mg(2+)-binding residues include asparagine 199 and aspartate 213. Substrate-binding positions include asparagine 264 and 321 to 323; that span reads GIM.

This sequence belongs to the succinate/malate CoA ligase beta subunit family. Heterotetramer of two alpha and two beta subunits. Requires Mg(2+) as cofactor.

The catalysed reaction is succinate + ATP + CoA = succinyl-CoA + ADP + phosphate. It carries out the reaction GTP + succinate + CoA = succinyl-CoA + GDP + phosphate. It functions in the pathway carbohydrate metabolism; tricarboxylic acid cycle; succinate from succinyl-CoA (ligase route): step 1/1. In terms of biological role, succinyl-CoA synthetase functions in the citric acid cycle (TCA), coupling the hydrolysis of succinyl-CoA to the synthesis of either ATP or GTP and thus represents the only step of substrate-level phosphorylation in the TCA. The beta subunit provides nucleotide specificity of the enzyme and binds the substrate succinate, while the binding sites for coenzyme A and phosphate are found in the alpha subunit. In Burkholderia multivorans (strain ATCC 17616 / 249), this protein is Succinate--CoA ligase [ADP-forming] subunit beta.